The following is a 380-amino-acid chain: Mitogen-activated protein kinase 3 (380 aa).

An N-acetylalanine modification is found at alanine 2. The Protein kinase domain occupies 43–331; sequence YTQLQYIGEG…VEEALAHPYL (289 aa). ATP is bound by residues 49-57 and lysine 72; that span reads IGEGAYGMV. The active-site Proton acceptor is the aspartate 167. A Phosphothreonine modification is found at threonine 199. A Phosphothreonine; by MAP2K1 and MAP2K2 modification is found at threonine 203. The short motif at 203-205 is the TXY element; it reads TEY. Phosphotyrosine; by MAP2K1 and MAP2K2 is present on tyrosine 205. Position 208 is a phosphothreonine; by autocatalysis (threonine 208).

It belongs to the protein kinase superfamily. CMGC Ser/Thr protein kinase family. MAP kinase subfamily. As to quaternary structure, binds both upstream activators and downstream substrates in multimolecular complexes. Found in a complex with at least BRAF, HRAS, MAP2K1/MEK1, MAPK3 and RGS14. Interacts with ADAM15, ARRB2, CANX, DAPK1 (via death domain), HSF4, IER3, MAP2K1/MEK1, MORG1, NISCH, PEA15, SGK1 and MKNK2. MKNK2 isoform 1 binding prevents from dephosphorylation and inactivation. Interacts with TPR. Interacts with HSF1 (via D domain and preferentially with hyperphosphorylated form); this interaction occurs upon heat shock. Interacts with CDKN2AIP. Interacts with CAVIN4. Interacts with GIT1; this interaction is necessary for MAPK3 localization to focal adhesions. Interacts with ZNF263. Interacts with EBF4. Requires Mg(2+) as cofactor. In terms of processing, phosphorylated upon FLT3 and KIT signaling. Ligand-activated ALK induces tyrosine phosphorylation. Dephosphorylated by PTPRJ at Tyr-205. Dually phosphorylated on Thr-203 and Tyr-205, which activates the enzyme. Ubiquitinated by TRIM15 via 'Lys-63'-linked ubiquitination; leading to activation. Deubiquitinated by CYLD. In terms of tissue distribution, highest levels within the nervous system, expressed in different tissues, mostly in intestine, placenta and lung.

The protein localises to the cytoplasm. The protein resides in the nucleus. Its subcellular location is the membrane. It localises to the caveola. It is found in the cell junction. The protein localises to the focal adhesion. It catalyses the reaction L-seryl-[protein] + ATP = O-phospho-L-seryl-[protein] + ADP + H(+). The enzyme catalyses L-threonyl-[protein] + ATP = O-phospho-L-threonyl-[protein] + ADP + H(+). With respect to regulation, phosphorylated by MAP2K1/MEK1 and MAP2K2/MEK2 on Thr-203 and Tyr-205 in response to external stimuli like insulin or NGF. Both phosphorylations are required for activity. This phosphorylation causes dramatic conformational changes, which enable full activation and interaction of MAPK1/ERK2 with its substrates. Dephosphorylated and inactivated by DUSP3, DUSP6 and DUSP9. In terms of biological role, serine/threonine kinase which acts as an essential component of the MAP kinase signal transduction pathway. MAPK1/ERK2 and MAPK3/ERK1 are the 2 MAPKs which play an important role in the MAPK/ERK cascade. They participate also in a signaling cascade initiated by activated KIT and KITLG/SCF. Depending on the cellular context, the MAPK/ERK cascade mediates diverse biological functions such as cell growth, adhesion, survival and differentiation through the regulation of transcription, translation, cytoskeletal rearrangements. The MAPK/ERK cascade also plays a role in initiation and regulation of meiosis, mitosis, and postmitotic functions in differentiated cells by phosphorylating a number of transcription factors. About 160 substrates have already been discovered for ERKs. Many of these substrates are localized in the nucleus, and seem to participate in the regulation of transcription upon stimulation. However, other substrates are found in the cytosol as well as in other cellular organelles, and those are responsible for processes such as translation, mitosis and apoptosis. Moreover, the MAPK/ERK cascade is also involved in the regulation of the endosomal dynamics, including lysosome processing and endosome cycling through the perinuclear recycling compartment (PNRC); as well as in the fragmentation of the Golgi apparatus during mitosis. The substrates include transcription factors (such as ATF2, BCL6, ELK1, ERF, FOS, HSF4 or SPZ1), cytoskeletal elements (such as CANX, CTTN, GJA1, MAP2, MAPT, PXN, SORBS3 or STMN1), regulators of apoptosis (such as BAD, BTG2, CASP9, DAPK1, IER3, MCL1 or PPARG), regulators of translation (such as EIF4EBP1) and a variety of other signaling-related molecules (like ARHGEF2, DEPTOR, FRS2 or GRB10). Protein kinases (such as RAF1, RPS6KA1/RSK1, RPS6KA3/RSK2, RPS6KA2/RSK3, RPS6KA6/RSK4, SYK, MKNK1/MNK1, MKNK2/MNK2, RPS6KA5/MSK1, RPS6KA4/MSK2, MAPKAPK3 or MAPKAPK5) and phosphatases (such as DUSP1, DUSP4, DUSP6 or DUSP16) are other substrates which enable the propagation the MAPK/ERK signal to additional cytosolic and nuclear targets, thereby extending the specificity of the cascade. The chain is Mitogen-activated protein kinase 3 (Mapk3) from Rattus norvegicus (Rat).